Consider the following 202-residue polypeptide: Pyridoxal 5'-phosphate synthase subunit PdxT (202 aa).

49–51 (GES) contributes to the L-glutamine binding site. Cysteine 81 serves as the catalytic Nucleophile. L-glutamine-binding positions include arginine 110 and 139–140 (IR). Catalysis depends on charge relay system residues histidine 182 and glutamate 184.

Belongs to the glutaminase PdxT/SNO family. In terms of assembly, in the presence of PdxS, forms a dodecamer of heterodimers. Only shows activity in the heterodimer.

It carries out the reaction aldehydo-D-ribose 5-phosphate + D-glyceraldehyde 3-phosphate + L-glutamine = pyridoxal 5'-phosphate + L-glutamate + phosphate + 3 H2O + H(+). The enzyme catalyses L-glutamine + H2O = L-glutamate + NH4(+). It participates in cofactor biosynthesis; pyridoxal 5'-phosphate biosynthesis. Functionally, catalyzes the hydrolysis of glutamine to glutamate and ammonia as part of the biosynthesis of pyridoxal 5'-phosphate. The resulting ammonia molecule is channeled to the active site of PdxS. This is Pyridoxal 5'-phosphate synthase subunit PdxT from Rhodococcus jostii (strain RHA1).